The following is a 247-amino-acid chain: Histone acetyltransferase MCC1 (247 aa).

Residues 25-198 (IHYRPINPND…DAFLFVYFIN (174 aa)) enclose the N-acetyltransferase domain.

This sequence belongs to the acetyltransferase family.

It carries out the reaction L-lysyl-[protein] + acetyl-CoA = N(6)-acetyl-L-lysyl-[protein] + CoA + H(+). Its function is as follows. Histone acetyltransferase that probably regulates acetylation status of histone H3 during meiosis. Histone acetylation may influence recombination and chromosome segregation. The sequence is that of Histone acetyltransferase MCC1 (MCC1) from Arabidopsis thaliana (Mouse-ear cress).